Here is a 388-residue protein sequence, read N- to C-terminus: Reducing end xylose-releasing exo-oligoxylanase (388 aa).

Residue glutamate 70 is the Proton donor of the active site. Aspartate 263 functions as the Proton acceptor in the catalytic mechanism.

It belongs to the glycosyl hydrolase 8 (cellulase D) family.

The catalysed reaction is Hydrolysis of (1-&gt;4)-beta-D-xylose residues from the reducing end of oligosaccharides.. Its function is as follows. Hydrolyzes xylooligosaccharides with a degree of polymerization of greater than or equal to 3, releasing xylose from the reducing end. Only hydrolyzes the beta anomers of xylooligosaccharides, with inversion of anomeric configuration. Hydrolyzes the glucose and xylose-based trisaccharides where xylose is located at the -1 subsite, GXX, XXG and GXG. Does not hydrolyze xylan, chitosan, lichenan, curdlan or carboxymethylcellulose. The sequence is that of Reducing end xylose-releasing exo-oligoxylanase from Halalkalibacterium halodurans (strain ATCC BAA-125 / DSM 18197 / FERM 7344 / JCM 9153 / C-125) (Bacillus halodurans).